A 60-amino-acid chain; its full sequence is MAVPKKRTSKSRKRIRNNFWKKEKNDRIASRVFSLAQSILTGRSKSFYYAIRDKLPNSSE.

Belongs to the bacterial ribosomal protein bL32 family.

The protein localises to the plastid. It is found in the chloroplast. The chain is Large ribosomal subunit protein bL32c from Psilotum nudum (Whisk fern).